A 545-amino-acid polypeptide reads, in one-letter code: Baeyer-Villiger monooxygenase (545 aa).

Residues F24, D45, W54, D65, Y71, and V118 each contribute to the FAD site.

This sequence belongs to the FAD-binding monooxygenase family. Requires FAD as cofactor.

In terms of biological role, catalyzes a Baeyer-Villiger oxidation reaction, i.e. the insertion of an oxygen atom into a carbon-carbon bond adjacent to a carbonyl, which converts ketones to esters or lactones using NADPH as an electron donor. Besides cycloalkanones, can use cyclic alpha,beta-unsaturated ketones as substrates, leading to conjugated ene-lactones. Can also act on methylated cycloalkanones and methylated cycloalkenones with high enantioselectivity in some cases. In Pseudooceanicola batsensis (strain ATCC BAA-863 / DSM 15984 / KCTC 12145 / HTCC2597) (Oceanicola batsensis), this protein is Baeyer-Villiger monooxygenase.